The primary structure comprises 705 residues: Putative membrane protein SCO0839 (705 aa).

Helical transmembrane passes span W16–Y36, G177–V197, L202–V222, V237–T257, S281–L301, I316–L336, I373–S393, L529–L549, L554–F574, V587–M607, L627–A647, and L648–L668.

It belongs to the resistance-nodulation-cell division (RND) (TC 2.A.6) family. MmpL subfamily.

It is found in the cell membrane. This chain is Putative membrane protein SCO0839, found in Streptomyces coelicolor (strain ATCC BAA-471 / A3(2) / M145).